A 446-amino-acid polypeptide reads, in one-letter code: Protein odr-4 homolog (446 aa).

A helical transmembrane segment spans residues A76–T96. A compositionally biased stretch (basic and acidic residues) spans H394–A415. The interval H394–S417 is disordered. The chain crosses the membrane as a helical span at residues G426 to M446.

The protein belongs to the ODR-4 family.

The protein localises to the membrane. Functionally, may play a role in the trafficking of a subset of G-protein coupled receptors. The protein is Protein odr-4 homolog (odr4) of Xenopus laevis (African clawed frog).